Reading from the N-terminus, the 125-residue chain is Large ribosomal subunit protein bL12 (125 aa).

Belongs to the bacterial ribosomal protein bL12 family. In terms of assembly, homodimer. Part of the ribosomal stalk of the 50S ribosomal subunit. Forms a multimeric L10(L12)X complex, where L10 forms an elongated spine to which 2 to 4 L12 dimers bind in a sequential fashion. Binds GTP-bound translation factors.

Functionally, forms part of the ribosomal stalk which helps the ribosome interact with GTP-bound translation factors. Is thus essential for accurate translation. This chain is Large ribosomal subunit protein bL12, found in Mesorhizobium japonicum (strain LMG 29417 / CECT 9101 / MAFF 303099) (Mesorhizobium loti (strain MAFF 303099)).